We begin with the raw amino-acid sequence, 469 residues long: Cysteine--tRNA ligase (469 aa).

Residue cysteine 33 coordinates Zn(2+). The short motif at 35-45 is the 'HIGH' region element; sequence PTVYNLLHIGN. The Zn(2+) site is built by cysteine 214, histidine 239, and glutamate 243. The 'KMSKS' region motif lies at 271-275; sequence KMSKS. An ATP-binding site is contributed by lysine 274.

Belongs to the class-I aminoacyl-tRNA synthetase family. In terms of assembly, monomer. The cofactor is Zn(2+).

It is found in the cytoplasm. The enzyme catalyses tRNA(Cys) + L-cysteine + ATP = L-cysteinyl-tRNA(Cys) + AMP + diphosphate. The sequence is that of Cysteine--tRNA ligase from Petrotoga mobilis (strain DSM 10674 / SJ95).